A 142-amino-acid chain; its full sequence is Small ribosomal subunit protein uS12 (142 aa).

The protein belongs to the universal ribosomal protein uS12 family. In terms of assembly, part of the 30S ribosomal subunit.

Functionally, with S4 and S5 plays an important role in translational accuracy. Located at the interface of the 30S and 50S subunits. The sequence is that of Small ribosomal subunit protein uS12 from Methanocorpusculum labreanum (strain ATCC 43576 / DSM 4855 / Z).